The chain runs to 1199 residues: Ecdysone-induced protein 75B, isoforms C/D (1199 aa).

The disordered stretch occupies residues 130-182; that stretch reads TTDGPTAVLQQQQPQQQMPQHFESLPHHHPQQEHQPQQQQQQHHLQHHPHPHV. 2 stretches are compositionally biased toward low complexity: residues 139–149 and 162–172; these read QQQQPQQQMPQ and EHQPQQQQQQH. The segment at residues 242–318 is a DNA-binding region (nuclear receptor); that stretch reads TVLCRVCGDK…VGMSRDAVRF (77 aa). 2 NR C4-type zinc fingers span residues 245–265 and 282–306; these read CRVC…CEGC and CTKN…LKKC. The NR LBD domain maps to 352–600; it reads DQPRLLAAVL…QQMWSMEDGN (249 aa). Disordered stretches follow at residues 624-665, 771-808, 831-851, 895-961, 991-1104, and 1155-1188; these read KSPL…SALA, LDSP…SVDD, VSVS…KRQI, AEAD…SSHS, ENST…SNSA, and VTVT…NPGL. Composition is skewed to low complexity over residues 641 to 653, 792 to 804, 831 to 845, 897 to 942, and 950 to 961; these read GSPS…GVSL, SSGG…SPRS, VSVS…STSS, ADAS…AQSQ, and SSPKASMASSHS. Polar residues-rich tracts occupy residues 993–1006 and 1018–1040; these read STAA…VGNR and AVQN…QRQQ. Low complexity-rich tracts occupy residues 1041-1077, 1086-1104, and 1159-1187; these read SVSP…SASS, STSN…SNSA, and ASNG…PNPG.

This sequence belongs to the nuclear hormone receptor family. NR1 subfamily.

Its subcellular location is the nucleus. Its function is as follows. Implicated in the regulation of ecdysone-triggered gene hierarchies. Probably plays a key role in mediating the regulation of the larval molt by 20-OH-ecdysone. The sequence is that of Ecdysone-induced protein 75B, isoforms C/D (Eip75B) from Drosophila melanogaster (Fruit fly).